A 2248-amino-acid chain; its full sequence is Putative Polycomb group protein ASXL3 (2248 aa).

The 75-residue stretch at 10–84 (RTWAEAARLA…KSGLYALKKE (75 aa)) folds into the HTH HARE-type domain. The disordered stretch occupies residues 156–232 (ALKQALRQQQ…GKQTSQHLKR (77 aa)). Residues 203–216 (KNGEADSSDKEMKH) are compositionally biased toward basic and acidic residues. Residues 219–228 (KSPTGKQTSQ) show a composition bias toward polar residues. The region spanning 254 to 363 (PGSILVNTNL…FERFYGEKLG (110 aa)) is the DEUBAD domain. Disordered regions lie at residues 368 to 414 (ESVK…PASP), 547 to 583 (TSSM…EGQF), 607 to 643 (CISE…CTPA), 703 to 726 (EASP…PLTS), 762 to 853 (ERMA…ASIP), 869 to 1052 (LQRT…TGAR), 1123 to 1152 (TSKE…ETKM), 1183 to 1203 (QQSL…VHSS), 1431 to 1462 (KLSA…GFAP), 1573 to 1596 (TAPS…ADTT), and 1990 to 2068 (LSPN…KRLS). 5 stretches are compositionally biased toward polar residues: residues 371-389 (KLTT…SCGT), 395-407 (SAQT…QPKS), 564-580 (AVET…SSLE), 607-617 (CISETSFSSES), and 624-643 (SLPS…CTPA). Residues 796-818 (NLTSQQKNLSNTPEPIIMSSSSI) show a composition bias toward polar residues. Residues 937–949 (SHTSKSSEPSKSP) show a composition bias toward low complexity. Composition is skewed to basic and acidic residues over residues 950–968 (DGIR…KTAE), 975–987 (CKEK…DDQS), and 997–1008 (PEKEQPPREEPR). Residues 1036–1046 (RASTSTSVSGG) show a composition bias toward polar residues. Residues 2016-2046 (HPPPPPPPPPPPPLALPPPPPPPPPLPPPLP) show a composition bias toward pro residues. The segment at 2210–2247 (ELKCSCRLKAMIVCKGCGAFCHDDCIGPSKLCVACLVV) adopts a PHD-type; atypical zinc-finger fold.

This sequence belongs to the Asx family. As to quaternary structure, core component of the polycomb repressive deubiquitinase (PR-DUB) complex, at least composed of BAP1, one of ASXL1, ASXL2 or (probably) ASXL3, and one of MBD5 or MBD6. Distinct combinations of ASXL and MBD proteins may preferentially bind specific histone modification marks. The PR-DUB core associates with a number of accessory proteins, including FOXK1, FOXK2, KDM1B, HCFC1 and OGT; KDM1B specifically associates with ASXL2 PR-DUB complexes. Interacts (via PHD domain) with MBD5 and MBD6 (via MBD domain); the interaction is probably direct and mediates association of MBD proteins with the PR-DUB core. As to expression, expressed in pancreatic islets, testis, neuroblastoma, head and neck tumor.

The protein localises to the nucleus. In terms of biological role, putative Polycomb group (PcG) protein. PcG proteins act by forming multiprotein complexes, which are required to maintain the transcriptionally repressive state of homeotic genes throughout development. PcG proteins are not required to initiate repression, but to maintain it during later stages of development. They probably act via methylation of histones, rendering chromatin heritably changed in its expressibility. Non-catalytic component of the PR-DUB complex, a complex that specifically mediates deubiquitination of histone H2A monoubiquitinated at 'Lys-119' (H2AK119ub1). The PR-DUB complex is an epigenetic regulator of gene expression and acts as a transcriptional coactivator, affecting genes involved in development, cell communication, signaling, cell proliferation and cell viability. ASXL1, ASXL2 and ASXL3 function redundantly in the PR-DUB complex and are essential for chromatin recruitment and transcriptional activation of associated genes. The chain is Putative Polycomb group protein ASXL3 (ASXL3) from Homo sapiens (Human).